The sequence spans 357 residues: DNA polymerase IV 2 (357 aa).

Positions I4 to G184 constitute a UmuC domain. 2 residues coordinate Mg(2+): D8 and D102. E103 is a catalytic residue.

Belongs to the DNA polymerase type-Y family. As to quaternary structure, monomer. It depends on Mg(2+) as a cofactor.

It localises to the cytoplasm. It carries out the reaction DNA(n) + a 2'-deoxyribonucleoside 5'-triphosphate = DNA(n+1) + diphosphate. Its function is as follows. Poorly processive, error-prone DNA polymerase involved in untargeted mutagenesis. Copies undamaged DNA at stalled replication forks, which arise in vivo from mismatched or misaligned primer ends. These misaligned primers can be extended by PolIV. Exhibits no 3'-5' exonuclease (proofreading) activity. May be involved in translesional synthesis, in conjunction with the beta clamp from PolIII. This is DNA polymerase IV 2 (dinB2) from Agrobacterium fabrum (strain C58 / ATCC 33970) (Agrobacterium tumefaciens (strain C58)).